The sequence spans 364 residues: tRNA 2-selenouridine synthase (364 aa).

One can recognise a Rhodanese domain in the interval 14–137 (LIADTPIIDV…LRQTAIQATI (124 aa)). Cysteine 97 functions as the S-selanylcysteine intermediate in the catalytic mechanism.

It belongs to the SelU family. Monomer.

The catalysed reaction is 5-methylaminomethyl-2-thiouridine(34) in tRNA + selenophosphate + (2E)-geranyl diphosphate + H2O + H(+) = 5-methylaminomethyl-2-selenouridine(34) in tRNA + (2E)-thiogeraniol + phosphate + diphosphate. It carries out the reaction 5-methylaminomethyl-2-thiouridine(34) in tRNA + (2E)-geranyl diphosphate = 5-methylaminomethyl-S-(2E)-geranyl-thiouridine(34) in tRNA + diphosphate. It catalyses the reaction 5-methylaminomethyl-S-(2E)-geranyl-thiouridine(34) in tRNA + selenophosphate + H(+) = 5-methylaminomethyl-2-(Se-phospho)selenouridine(34) in tRNA + (2E)-thiogeraniol. The enzyme catalyses 5-methylaminomethyl-2-(Se-phospho)selenouridine(34) in tRNA + H2O = 5-methylaminomethyl-2-selenouridine(34) in tRNA + phosphate. Functionally, involved in the post-transcriptional modification of the uridine at the wobble position (U34) of tRNA(Lys), tRNA(Glu) and tRNA(Gln). Catalyzes the conversion of 2-thiouridine (S2U-RNA) to 2-selenouridine (Se2U-RNA). Acts in a two-step process involving geranylation of 2-thiouridine (S2U) to S-geranyl-2-thiouridine (geS2U) and subsequent selenation of the latter derivative to 2-selenouridine (Se2U) in the tRNA chain. The polypeptide is tRNA 2-selenouridine synthase (Escherichia coli O81 (strain ED1a)).